The chain runs to 126 residues: Small ribosomal subunit protein uS8 (126 aa).

The protein belongs to the universal ribosomal protein uS8 family. Part of the 30S ribosomal subunit. Contacts proteins S5 and S12.

Functionally, one of the primary rRNA binding proteins, it binds directly to 16S rRNA central domain where it helps coordinate assembly of the platform of the 30S subunit. The protein is Small ribosomal subunit protein uS8 of Lawsonia intracellularis (strain PHE/MN1-00).